The sequence spans 532 residues: Metal-staphylopine-binding protein CntA (532 aa).

A signal peptide spans 1–20 (MRKLTKMSAMLLASGLILTG). Cysteine 21 carries N-palmitoyl cysteine lipidation. Cysteine 21 carries S-diacylglycerol cysteine lipidation. 3 residues coordinate staphylopine: arginine 165, arginine 418, and asparagine 448.

This sequence belongs to the bacterial solute-binding protein 5 family. As to quaternary structure, the complex is composed of two ATP-binding proteins (CntD and CntF), two transmembrane proteins (CntB and CntC) and a solute-binding protein (CntA).

It is found in the cell membrane. Its function is as follows. Part of the ABC transporter complex CntABCDF (Opp1) involved in the uptake of metal in complex with the metallophore staphylopine (StP). May be involved in the import of a large array of divalent metals ions such as nickel, cobalt, zinc, copper and iron. Binds the metal via the metallophore StP, and transfers the StP-metal complex to the membrane-bound permease. In Staphylococcus aureus (strain Mu50 / ATCC 700699), this protein is Metal-staphylopine-binding protein CntA.